Consider the following 294-residue polypeptide: Tryptophan 2,3-dioxygenase (294 aa).

The interval 1–20 (MSEFKGCPFSGAASEAGTKA) is disordered. Substrate is bound by residues 63-67 (FIVQH), Y125, and R129. H252 is a binding site for heme. T266 provides a ligand contact to substrate.

The protein belongs to the tryptophan 2,3-dioxygenase family. As to quaternary structure, homotetramer. It depends on heme as a cofactor.

It catalyses the reaction L-tryptophan + O2 = N-formyl-L-kynurenine. It functions in the pathway amino-acid degradation; L-tryptophan degradation via kynurenine pathway; L-kynurenine from L-tryptophan: step 1/2. Functionally, heme-dependent dioxygenase that catalyzes the oxidative cleavage of the L-tryptophan (L-Trp) pyrrole ring and converts L-tryptophan to N-formyl-L-kynurenine. Catalyzes the oxidative cleavage of the indole moiety. This is Tryptophan 2,3-dioxygenase from Cupriavidus necator (strain ATCC 17699 / DSM 428 / KCTC 22496 / NCIMB 10442 / H16 / Stanier 337) (Ralstonia eutropha).